A 188-amino-acid polypeptide reads, in one-letter code: MKVIASSLRKGNVVDIDGRLYVVLTAQNFHPGKGTPVTQVDMRRISDGTKVSERWKTTEQVERATVDEREYDFLYEDGEGYHFMEPVSYDQVVVSPDVVGDGKVFLTEGMRVYLQTHNDVAISIEFPQKVTVEITETEPVVKGQTASSSYKPAMCTNGLRVMVPPHISAGTRIVINTEDLSYVERAKD.

It belongs to the elongation factor P family.

It localises to the cytoplasm. It participates in protein biosynthesis; polypeptide chain elongation. Its function is as follows. Involved in peptide bond synthesis. Stimulates efficient translation and peptide-bond synthesis on native or reconstituted 70S ribosomes in vitro. Probably functions indirectly by altering the affinity of the ribosome for aminoacyl-tRNA, thus increasing their reactivity as acceptors for peptidyl transferase. In Cereibacter sphaeroides (strain KD131 / KCTC 12085) (Rhodobacter sphaeroides), this protein is Elongation factor P.